We begin with the raw amino-acid sequence, 123 residues long: MKTKVGFNRLNRKSSHRKALLKNMVISLFKHEKITSTKAKLSEVKRFAEKLITRAKIDSVHNRREVSKFIHDKFILNKLFTKISPIFKERKGGYVRVIKLGRRYGDAAEMAILELVDKTLEEK.

It belongs to the bacterial ribosomal protein bL17 family. In terms of assembly, part of the 50S ribosomal subunit. Contacts protein L32.

The protein is Large ribosomal subunit protein bL17 of Borrelia hermsii (strain HS1 / DAH).